We begin with the raw amino-acid sequence, 140 residues long: ATP synthase epsilon chain (140 aa).

Belongs to the ATPase epsilon chain family. In terms of assembly, F-type ATPases have 2 components, CF(1) - the catalytic core - and CF(0) - the membrane proton channel. CF(1) has five subunits: alpha(3), beta(3), gamma(1), delta(1), epsilon(1). CF(0) has three main subunits: a, b and c.

The protein resides in the cell inner membrane. Produces ATP from ADP in the presence of a proton gradient across the membrane. The polypeptide is ATP synthase epsilon chain (Nitrosomonas eutropha (strain DSM 101675 / C91 / Nm57)).